A 280-amino-acid chain; its full sequence is uncharacterized protein (280 aa).

Belongs to the eukaryotic-type primase small subunit family.

This is an uncharacterized protein from Archaeoglobus fulgidus (strain ATCC 49558 / DSM 4304 / JCM 9628 / NBRC 100126 / VC-16).